The following is a 375-amino-acid chain: MFKLKSVNLQVYIMLIAIAVIMAFFSVATDGAYLSARNISNLLRQTSITGXLAIGMVFVIISAEIDLSVGSLMGLLGGFAAIADVWWGFPLPVTIIATIALGLIFGIWNGWWVAYRKVPSFIVTLAGYLAFRGILIGLTNGTTVSPISGTMTVIGQGYLSDIAGVILGGIAVIGFVLWGNYQRRSRQQLQLEVSALSKDFTKYALFAVIVLGAIYLLNDYRGIPFPVLVLAVLAILGLFLSRKTSFGRHVYAIGGNIDAAKLSGINVEKTKLIIFAMNGVLVAIAGLILSARLGAGSPSAGQNAELDAIAACVIGGASLAGGVGSVFGVVIGALIIASLDNGMSMLDVPTFWQYIVKGGILLLAVWIDTSNKKKM.

Transmembrane regions (helical) follow at residues 9–29 (LQVYIMLIAIAVIMAFFSVAT), 52–72 (LAIGMVFVIISAEIDLSVGSL), 85–105 (VWWGFPLPVTIIATIALGLIF), 118–138 (VPSFIVTLAGYLAFRGILIGL), 159–179 (LSDIAGVILGGIAVIGFVLWG), 199–219 (DFTKYALFAVIVLGAIYLLND), 220–240 (YRGIPFPVLVLAVLAILGLFL), 271–291 (KLIIFAMNGVLVAIAGLILSA), 319–339 (LAGGVGSVFGVVIGALIIASL), and 348–368 (VPTFWQYIVKGGILLLAVWID).

Belongs to the binding-protein-dependent transport system permease family. AraH/RbsC subfamily.

It localises to the cell inner membrane. Part of the binding-protein-dependent transport system for D-xylose. Probably responsible for the translocation of the substrate across the membrane. The sequence is that of Xylose transport system permease protein XylH (xylH) from Haemophilus influenzae (strain ATCC 51907 / DSM 11121 / KW20 / Rd).